The following is a 1132-amino-acid chain: Tyrosine-protein kinase JAK2 (1132 aa).

The tract at residues 1–239 (MGMACLTMTE…RYRFRRFIQQ (239 aa)) is interaction with cytokine/interferon/growth hormone receptors. The region spanning 37-380 (PVLQVYLYHS…GYYRLTADAH (344 aa)) is the FERM domain. Tyrosine 119 is modified (phosphotyrosine; by autocatalysis). Phosphotyrosine is present on residues tyrosine 372 and tyrosine 373. Residues 401–482 (HGPISMDFAI…SLKDLLNCYQ (82 aa)) enclose the SH2; atypical domain. Residue serine 523 is modified to Phosphoserine. Residues 545-809 (LIFNESLGQG…AVIRDLNSLF (265 aa)) enclose the Protein kinase 1 domain. Residues tyrosine 570 and tyrosine 813 each carry the phosphotyrosine modification. The 278-residue stretch at 849–1126 (LKFLQQLGKG…RDLSLRVDQI (278 aa)) folds into the Protein kinase 2 domain. ATP is bound at residue 855 to 863 (LGKGNFGSV). Phosphotyrosine; by autocatalysis is present on tyrosine 868. Lysine 882 provides a ligand contact to ATP. Tyrosine 966 and tyrosine 972 each carry phosphotyrosine; by autocatalysis. Aspartate 976 functions as the Proton acceptor in the catalytic mechanism. Tyrosine 1007 and tyrosine 1008 each carry phosphotyrosine; by autocatalysis.

This sequence belongs to the protein kinase superfamily. Tyr protein kinase family. JAK subfamily. Interacts with IL23R, SKB1 and STAM2. Interacts with EPOR. Interacts with LYN. Interacts with SIRPA. Interacts with SH2B1. Interacts with TEC. Interacts with IFNGR2 (via intracellular domain). Interacts with LEPR (Isoform B). Interacts with HSP90AB1; promotes functional activation in a heat shock-dependent manner. Interacts with STRA6. Interacts with ASB2; the interaction targets JAK2 for Notch-induced proteasomal degradation. Mg(2+) serves as cofactor. Post-translationally, autophosphorylated, leading to regulate its activity. Leptin promotes phosphorylation on tyrosine residues, including phosphorylation on Tyr-813. Autophosphorylation on Tyr-119 in response to EPO down-regulates its kinase activity. Autophosphorylation on Tyr-868, Tyr-966 and Tyr-972 in response to growth hormone (GH) are required for maximal kinase activity. Also phosphorylated by TEC. Phosphorylated on tyrosine residues in response to interferon gamma signaling. Phosphorylated on tyrosine residues in response to a signaling cascade that is activated by increased cellular retinol. In terms of processing, undergoes Notch-induced ubiquitination and subsequent proteasomal degradation which is mediated by ASB1 or ASB2, the substrate-recognition components of probable ECS E3 ubiquitin-protein ligase complexes. As to expression, ubiquitously expressed throughout most tissues.

The protein resides in the endomembrane system. It localises to the cytoplasm. Its subcellular location is the nucleus. The enzyme catalyses L-tyrosyl-[protein] + ATP = O-phospho-L-tyrosyl-[protein] + ADP + H(+). Its activity is regulated as follows. Regulated by autophosphorylation, can both activate or decrease activity. Heme regulates its activity by enhancing the phosphorylation on Tyr-1007 and Tyr-1008. Functionally, non-receptor tyrosine kinase involved in various processes such as cell growth, development, differentiation or histone modifications. Mediates essential signaling events in both innate and adaptive immunity. In the cytoplasm, plays a pivotal role in signal transduction via its association with type I receptors such as growth hormone (GHR), prolactin (PRLR), leptin (LEPR), erythropoietin (EPOR), thrombopoietin (THPO); or type II receptors including IFN-alpha, IFN-beta, IFN-gamma and multiple interleukins. Following ligand-binding to cell surface receptors, phosphorylates specific tyrosine residues on the cytoplasmic tails of the receptor, creating docking sites for STATs proteins. Subsequently, phosphorylates the STATs proteins once they are recruited to the receptor. Phosphorylated STATs then form homodimer or heterodimers and translocate to the nucleus to activate gene transcription. For example, cell stimulation with erythropoietin (EPO) during erythropoiesis leads to JAK2 autophosphorylation, activation, and its association with erythropoietin receptor (EPOR) that becomes phosphorylated in its cytoplasmic domain. Then, STAT5 (STAT5A or STAT5B) is recruited, phosphorylated and activated by JAK2. Once activated, dimerized STAT5 translocates into the nucleus and promotes the transcription of several essential genes involved in the modulation of erythropoiesis. Part of a signaling cascade that is activated by increased cellular retinol and that leads to the activation of STAT5 (STAT5A or STAT5B). In addition, JAK2 mediates angiotensin-2-induced ARHGEF1 phosphorylation. Plays a role in cell cycle by phosphorylating CDKN1B. Cooperates with TEC through reciprocal phosphorylation to mediate cytokine-driven activation of FOS transcription. In the nucleus, plays a key role in chromatin by specifically mediating phosphorylation of 'Tyr-41' of histone H3 (H3Y41ph), a specific tag that promotes exclusion of CBX5 (HP1 alpha) from chromatin. Up-regulates the potassium voltage-gated channel activity of KCNA3. This is Tyrosine-protein kinase JAK2 from Rattus norvegicus (Rat).